A 6061-amino-acid polypeptide reads, in one-letter code: Intermembrane lipid transfer protein vps13B (6061 aa).

Residues F2–E115 enclose the Chorein N-terminal domain. Disordered regions lie at residues P590–K623, D803–N828, Q1386–S1414, S1604–S1644, Q2747–E2784, G2950–T2972, L3364–D3401, Q3855–K3876, Q4011–N4068, E4107–E4132, N4262–R4297, S4321–G4442, T4601–L4631, N4753–F4797, N4861–Q4882, L5003–E5030, and N5372–D5429. A compositionally biased stretch (basic and acidic residues) spans H595 to N614. A compositionally biased stretch (basic and acidic residues) spans Q1395–E1406. Residues Q2747–R2756 are compositionally biased toward polar residues. Acidic residues predominate over residues N2774–E2784. Residues I3388 to D3401 are compositionally biased toward acidic residues. A compositionally biased stretch (basic and acidic residues) spans Q4015–E4024. The span at L4031–N4040 shows a compositional bias: low complexity. A compositionally biased stretch (acidic residues) spans D4041 to N4057. The span at N4058–N4068 shows a compositional bias: low complexity. The segment covering E4107 to K4120 has biased composition (basic and acidic residues). Composition is skewed to low complexity over residues T4330 to N4383 and N4399 to N4429. The span at S4430–P4441 shows a compositional bias: polar residues. 2 stretches are compositionally biased toward low complexity: residues T4601 to N4617 and N4753 to N4784. The span at S4785–T4794 shows a compositional bias: polar residues. Low complexity-rich tracts occupy residues D5013 to E5030 and N5372 to N5384. Residues N5385–N5409 are compositionally biased toward basic and acidic residues. Over residues N5410–N5421 the composition is skewed to low complexity.

This sequence belongs to the VPS13 family.

The protein localises to the membrane. Its function is as follows. Mediates the transfer of lipids between membranes at organelle contact sites. In Dictyostelium discoideum (Social amoeba), this protein is Intermembrane lipid transfer protein vps13B (vps13B).